Here is a 231-residue protein sequence, read N- to C-terminus: Putative transglycosylase H16_A0665 (231 aa).

Residues 8-28 (FIKLLVLAVIGGALLAAIAIL) form a helical membrane-spanning segment.

It belongs to the glycosyltransferase 51 family.

The protein resides in the secreted. Its subcellular location is the membrane. Its pathway is cell wall biogenesis; peptidoglycan biosynthesis. Functionally, cell wall formation. This chain is Putative transglycosylase H16_A0665, found in Cupriavidus necator (strain ATCC 17699 / DSM 428 / KCTC 22496 / NCIMB 10442 / H16 / Stanier 337) (Ralstonia eutropha).